We begin with the raw amino-acid sequence, 660 residues long: Protein FAM161A (660 aa).

2 coiled-coil regions span residues 93-120 (EEYF…YQDK) and 296-320 (YHDL…ALLA). The segment at 341-525 (QLRDFLKYKK…PTVSSRGREQ (185 aa)) is required for interaction with CFAP418. Glycyl lysine isopeptide (Lys-Gly) (interchain with G-Cter in SUMO2) cross-links involve residues lysine 468 and lysine 484. Residues 522 to 552 (GREQAVRKSEKERMREYQRELEEREEKLKKR) are a coiled coil. Positions 605–660 (KSVTEDKESFNEEEKIEERENGEENYFIDTNSQDSYKEKDEANEESEEEKSVEESH) are disordered. Basic and acidic residues predominate over residues 606–623 (SVTEDKESFNEEEKIEER). The span at 645–660 (EANEESEEEKSVEESH) shows a compositional bias: acidic residues.

Belongs to the FAM161 family. Interacts (via central region) with CFAP418 (via N-terminus); the interaction is direct. Interacts (via C-terminus) with microtubules. Interacts with LCA5. Interacts with CEP290. Interacts with SDCCAG8. Interacts with FAM161B. Interacts with POC1B. Interacts with CEP78. Forms a microtubule-associated complex with POC5, CETN2 and POC1B. Interacts with CCDC15. Isoform 1 and isoform 3 are widely expressed with highest levels in retina and testis, with isoform 1 being the most abundant in all tissues tested.

The protein localises to the cytoplasm. Its subcellular location is the cytoskeleton. The protein resides in the cilium basal body. It is found in the cell projection. It localises to the cilium. The protein localises to the microtubule organizing center. Its subcellular location is the centrosome. The protein resides in the centriole. In terms of biological role, involved in ciliogenesis. The sequence is that of Protein FAM161A (FAM161A) from Homo sapiens (Human).